A 308-amino-acid polypeptide reads, in one-letter code: CMP-N-acetylneuraminate:beta-galactoside alpha-2,3-sialyltransferase (308 aa).

Catalysis depends on Asp201, which acts as the Proton acceptor. Residues 221 to 225 (LPHPR), 242 to 243 (FE), and 262 to 263 (SS) each bind CMP-N-acetyl-beta-neuraminate. Residue His223 is the Proton donor of the active site.

Belongs to the glycosyltransferase 52 family. Divalent metal cations are not required for the alpha-2,3-sialyltransferase activity. serves as cofactor.

In terms of biological role, catalyzes the transfer of sialic acid from the substrate CMP-N-acetylneuraminate to lactosyl lipids as preferred acceptor substrates in vitro, forming alpha-2,3-linked sialosides. Beta-1,4-linked galactosyl lipids are better substrates than beta-1,3-linked galactosyl lipids. The natural acceptor substrate may be cell surface oligosaccharides in lipooligosaccharide (LOS), whose sialylation has been demonstrated vital for the virulence of P.multocida. This Pasteurella multocida (strain Pm70) protein is CMP-N-acetylneuraminate:beta-galactoside alpha-2,3-sialyltransferase (lst).